A 1841-amino-acid polypeptide reads, in one-letter code: Sodium channel protein type 4 subunit alpha (1841 aa).

Residues 1 to 131 lie on the Cytoplasmic side of the membrane; sequence MASSSLPTLV…RVAIKVLIHA (131 aa). Basic and acidic residues predominate over residues 32-60; that stretch reads AMEEEARLQRNKQMEIEEPERKPRSDLEA. The interval 32–63 is disordered; it reads AMEEEARLQRNKQMEIEEPERKPRSDLEAGKN. An I repeat occupies 113–448; sequence MLSPFSIVRR…VVAMAYAEQN (336 aa). Residues 132–150 form a helical membrane-spanning segment; it reads LFSMFIMITILTNCVFMTM. Over 151 to 157 the chain is Extracellular; the sequence is SNPPSWS. A helical transmembrane segment spans residues 158-178; the sequence is KDVEYTFTGIYTFESLIKMLA. Over 179 to 192 the chain is Cytoplasmic; sequence RGFCIDDFTFLRDP. Residues 193-210 traverse the membrane as a helical segment; that stretch reads WNWLDFSVITMAYVTEFV. At 211–216 the chain is on the extracellular side; sequence DLGNIS. Residue asparagine 214 is glycosylated (N-linked (GlcNAc...) asparagine). Residues 217–233 form a helical membrane-spanning segment; it reads ALRTFRVLRALKTITVI. Residues 234–252 are Cytoplasmic-facing; the sequence is PGLKTIVGALIQSVKKLSD. A helical membrane pass occupies residues 253-272; sequence VMILTVFCLSVFALVGLQLF. Over 273–385 the chain is Extracellular; the sequence is MGNLRQKCVR…PNYGYTSYDT (113 aa). A disulfide bridge connects residues cysteine 280 and cysteine 354. N-linked (GlcNAc...) asparagine glycosylation is found at asparagine 288, asparagine 291, asparagine 297, asparagine 303, asparagine 315, asparagine 327, and asparagine 356. The cysteines at positions 363 and 369 are disulfide-linked. Residues 386-410 constitute an intramembrane region (pore-forming); that stretch reads FSWAFLALFRLMTQDYWENLFQLTL. Residues 411-417 are Extracellular-facing; that stretch reads RAAGKTY. The helical transmembrane segment at 418 to 438 threads the bilayer; it reads MIFFVVIIFLGSFYLINLILA. Over 439 to 572 the chain is Cytoplasmic; the sequence is VVAMAYAEQN…HIILLIVMDP (134 aa). Positions 484–522 are disordered; sequence ALEGGEEADGDPTHSKDCNGSLDTSGEKGPPRPSCSAES. One copy of the II repeat lies at 554 to 826; that stretch reads CCAPWVKFKH…QIAIGRIKWG (273 aa). A helical transmembrane segment spans residues 573–591; it reads FVDLGITICIVLNTLFMAM. Topologically, residues 592–602 are extracellular; that stretch reads EHYPMTEHFDN. A helical membrane pass occupies residues 603–622; the sequence is VLSVGNLVFTGIFTAEMVLK. The Cytoplasmic segment spans residues 623–636; that stretch reads LIAMDPYEYFQQGW. Residues 637 to 656 traverse the membrane as a helical segment; that stretch reads NIFDSFIVTLSLVELGLANV. Topologically, residues 657 to 658 are extracellular; that stretch reads QG. Residues 659-676 form a helical membrane-spanning segment; it reads LSVLRSFRLLRVFKLAKS. The Cytoplasmic portion of the chain corresponds to 677–692; the sequence is WPTLNMLIKIIGNSVG. A helical transmembrane segment spans residues 693 to 711; the sequence is ALGNLTLVLAIIVFIFAVV. Residues 712 to 740 lie on the Extracellular side of the membrane; that stretch reads GMQLFGKSYKECVCKIASDCSLPRWHMHD. Cysteine 725 and cysteine 731 form a disulfide bridge. The pore-forming intramembrane region spans 741 to 761; that stretch reads FFHSFLIVFRILCGEWIETMW. The Extracellular portion of the chain corresponds to 762–772; that stretch reads DCMEVAGQAMC. The cysteines at positions 763 and 772 are disulfide-linked. Residues 773–791 form a helical membrane-spanning segment; it reads LTVFLMVMVIGNLVVLNLF. Over 792–1026 the chain is Cytoplasmic; it reads LALLLSSFSA…ACFKIVEHNW (235 aa). Disordered stretches follow at residues 854-896 and 925-983; these read EPGG…LTDG and SDLE…EGEL. Over residues 867–887 the composition is skewed to basic and acidic residues; it reads EDEKKEPPPEDGNKELKDNHI. Composition is skewed to acidic residues over residues 925 to 941 and 969 to 983; these read SDLE…FSEP and EDPE…EGEL. The III repeat unit spans residues 1007-1320; sequence RGKMWWTLRR…KKYYNAMKKL (314 aa). Residues 1027 to 1044 form a helical membrane-spanning segment; sequence FETFIVFMILLSSGALAF. Residues 1045–1057 are Extracellular-facing; sequence EDIYIEQRRVIRT. The helical transmembrane segment at 1058–1076 threads the bilayer; the sequence is ILEYADKVFTYIFILEMLL. Over 1077–1090 the chain is Cytoplasmic; the sequence is KWVAYGFKVYFTNA. A helical membrane pass occupies residues 1091–1109; that stretch reads WCWLDFLIVDVSIISLVAN. At 1110–1117 the chain is on the extracellular side; it reads WLGYSELG. A helical transmembrane segment spans residues 1118–1136; it reads PIKSLRTLRALRPLRALSR. Topologically, residues 1137 to 1153 are cytoplasmic; it reads FEGMRVVVNALLGAIPS. A helical membrane pass occupies residues 1154 to 1173; the sequence is IMNVLLVCLIFWLIFSIMGV. Residues 1174 to 1224 are Extracellular-facing; the sequence is NLFAGKFYYCINTTTSERFDISVVNNKSECESLMYTGQVRWMNVKVNYDNV. Cysteine 1183 and cysteine 1203 are disulfide-bonded. Asparagine 1185 and asparagine 1199 each carry an N-linked (GlcNAc...) asparagine glycan. An intramembrane region (pore-forming) is located at residues 1225–1246; that stretch reads GLGYLSLLQVATFKGWMDIMYA. The Extracellular segment spans residues 1247 to 1263; it reads AVDSREKEEQPDYEVNL. A helical membrane pass occupies residues 1264-1285; it reads YMYLYFVIFIIFGSFFTLNLFI. At 1286 to 1348 the chain is on the cytoplasmic side; sequence GVIIDNFNQQ…MVYDFVTKQV (63 aa). An important for rapid channel inactivation region spans residues 1304 to 1306; that stretch reads IFM. Residues 1329–1627 form an IV repeat; that stretch reads IPRPQNKIQG…WEKFDPDATQ (299 aa). The chain crosses the membrane as a helical span at residues 1349 to 1366; that stretch reads FDISIMILICLNMVTMMV. Over 1367 to 1377 the chain is Extracellular; that stretch reads ETDDQSQLKVD. A helical transmembrane segment spans residues 1378–1396; sequence ILYNINMVFIIVFTGECVL. Residues 1397-1408 lie on the Cytoplasmic side of the membrane; sequence KMFALRHYYFTI. Residues 1409-1426 traverse the membrane as a helical segment; the sequence is GWNIFDFVVVILSIVGLA. At 1427-1439 the chain is on the extracellular side; that stretch reads LSDLIQKYFVSPT. The chain crosses the membrane as a helical span at residues 1440 to 1456; the sequence is LFRVIRLARIGRVLRLI. Over 1457–1475 the chain is Cytoplasmic; sequence RGAKGIRTLLFALMMSLPA. Residues 1476 to 1493 traverse the membrane as a helical segment; sequence LFNIGLLLFLVMFIYSIF. The Extracellular portion of the chain corresponds to 1494–1515; it reads GMSNFAYVKKESGIDDMFNFET. The pore-forming intramembrane region spans 1516-1538; sequence FGNSIICLFEITTSAGWDGLLNP. The Extracellular portion of the chain corresponds to 1539 to 1568; that stretch reads ILNSGPPDCDPTLENPGTNIKGDCGNPSIG. Cysteine 1547 and cysteine 1562 are joined by a disulfide. A helical transmembrane segment spans residues 1569–1591; the sequence is ICFFCSYIIISFLIVVNMYIAII. At 1592–1841 the chain is on the cytoplasmic side; it reads LENFNVATEE…VRPGVKESLV (250 aa). Residues 1721–1750 enclose the IQ domain; sequence EEVCAIKIQRAYRRHLLQRSVKQASYMYRH. Over residues 1776-1794 the composition is skewed to basic and acidic residues; the sequence is SEKEDNGVQSQGEKEKDST. Residues 1776–1841 form a disordered region; it reads SEKEDNGVQS…VRPGVKESLV (66 aa). A compositionally biased stretch (polar residues) spans 1801–1812; the sequence is TEVTAPSSSDTA. Residues 1814–1826 show a composition bias toward pro residues; sequence TPPPPSPPPPSSP.

Belongs to the sodium channel (TC 1.A.1.10) family. Nav1.4/SCN4A subfamily. The Nav1.4 voltage-gated sodium channel consists of an ion-conducting alpha subunit SCN4A which is functional on its own and a regulatory beta subunit SCN1B. SCN1B strongly enhances the presence of SCN4A at the cell surface. SCN1B is also required for rapid channel inactivation and recovery after inactivation. It prevents the decrease of channel activity in response to repetitive, high-frequency depolarizations. Interacts with the syntrophins SNTA1, SNTB1 and SNTB2 (via PDZ domain); probably links SCN4A to the actin cytoskeleton and the extracellular matrix via the dystrophin-associated protein complex and regulates its localization in muscle cells. Interacts with TMEM233; probable regulator of the channel. Detected in quadriceps muscle (at protein level). Detected in hind-limb skeletal muscles, but not in heart or brain. Detected at low levels in the myocardium. According to Pubme=26427606 detected also in brain.

It localises to the cell membrane. The enzyme catalyses Na(+)(in) = Na(+)(out). The channel is inhibited by tetrodotoxin. In terms of biological role, pore-forming subunit of Nav1.4, a voltage-gated sodium (Nav) channel that directly mediates the depolarizing phase of action potentials in excitable membranes. Navs, also called VGSCs (voltage-gated sodium channels) or VDSCs (voltage-dependent sodium channels), operate by switching between closed and open conformations depending on the voltage difference across the membrane. In the open conformation they allow Na(+) ions to selectively pass through the pore, along their electrochemical gradient. The influx of Na+ ions provokes membrane depolarization, initiating the propagation of electrical signals throughout cells and tissues. Highly expressed in skeletal muscles, Nav1.4 generates the action potential crucial for muscle contraction. This chain is Sodium channel protein type 4 subunit alpha, found in Mus musculus (Mouse).